The sequence spans 123 residues: Small ribosomal subunit protein bS16 (123 aa).

The segment at 86 to 123 (PVRAEQTKQPQPKAKAQQRAKDQAERDAAAAAEAAAGE) is disordered. Low complexity predominate over residues 93–102 (KQPQPKAKAQ). Residues 104–113 (RAKDQAERDA) show a composition bias toward basic and acidic residues. Low complexity predominate over residues 114–123 (AAAAEAAAGE).

The protein belongs to the bacterial ribosomal protein bS16 family.

In Paramagnetospirillum magneticum (strain ATCC 700264 / AMB-1) (Magnetospirillum magneticum), this protein is Small ribosomal subunit protein bS16.